The chain runs to 349 residues: Probable G-protein coupled receptor 21 (349 aa).

The Extracellular segment spans residues 1 to 32 (MNSTWDGNQSSHPFCLLALGYLETVRFCLLEV). Asparagine 2 and asparagine 8 each carry an N-linked (GlcNAc...) asparagine glycan. Residues 33–53 (LIIVFLTVLIISGNIIVIFVF) traverse the membrane as a helical segment. Residues 54–75 (HCAPLLNHHSTSYFIQTMAYAD) lie on the Cytoplasmic side of the membrane. Residues 76–96 (LLVGVSCLVPSLSLLYYPLPI) traverse the membrane as a helical segment. Over 97 to 104 (EEAMTCQV) the chain is Extracellular. A helical membrane pass occupies residues 105–125 (FGFVVSVLKSISMASLACISI). Topologically, residues 126–147 (DRYIAITKPLTYNTLVTPWRLR) are cytoplasmic. The chain crosses the membrane as a helical span at residues 148-168 (LCIFLIWLYSTLVFLPSFFHW). Residues 169–191 (GKPGYHGDVFQWCAESWHTNSYF) are Extracellular-facing. The chain crosses the membrane as a helical span at residues 192–212 (TLFIVMMLYAPAALIVCFTYF). Residues 213-252 (NIFRICQQHTKEISERQARFSSQNGETGEPQTCPDKRYAM) lie on the Cytoplasmic side of the membrane. The chain crosses the membrane as a helical span at residues 253-273 (VLFRITSVFYVLWLPYIIYFL). The Extracellular segment spans residues 274–283 (LESSTGCSSR). The chain crosses the membrane as a helical span at residues 284–304 (LASFLTTWLAISNSFCNCIIY). Residues 305 to 349 (SLSNSVFQRGLKGLSGSLCTSCASHTTAKDPYTVRCKGPPNGSHI) lie on the Cytoplasmic side of the membrane.

This sequence belongs to the G-protein coupled receptor 1 family.

Its subcellular location is the cell membrane. In terms of biological role, orphan receptor. This is Probable G-protein coupled receptor 21 (Gpr21) from Mus musculus (Mouse).